The following is a 594-amino-acid chain: UvrABC system protein C (594 aa).

One can recognise a GIY-YIG domain in the interval 14–91 (DQPGCYLMKD…IKKHDPKYNI (78 aa)). Residues 196-231 (KEVRSELETKMYEASEKLEFERAKELRDQIAHIDAI) enclose the UVR domain.

Belongs to the UvrC family. In terms of assembly, interacts with UvrB in an incision complex.

The protein resides in the cytoplasm. In terms of biological role, the UvrABC repair system catalyzes the recognition and processing of DNA lesions. UvrC both incises the 5' and 3' sides of the lesion. The N-terminal half is responsible for the 3' incision and the C-terminal half is responsible for the 5' incision. This chain is UvrABC system protein C, found in Bacillus thuringiensis (strain Al Hakam).